Here is a 489-residue protein sequence, read N- to C-terminus: mRNA cleavage and polyadenylation factor CLP1 (489 aa).

Residues Glu-28 and 152–157 (YSGKTT) contribute to the ATP site.

Belongs to the Clp1 family. Clp1 subfamily. As to quaternary structure, component of a pre-mRNA cleavage factor complex. Interacts directly with PCF11.

It localises to the nucleus. Required for endonucleolytic cleavage during polyadenylation-dependent pre-mRNA 3'-end formation. The polypeptide is mRNA cleavage and polyadenylation factor CLP1 (Candida albicans (strain SC5314 / ATCC MYA-2876) (Yeast)).